A 351-amino-acid polypeptide reads, in one-letter code: UDP-N-acetylglucosamine--N-acetylmuramyl-(pentapeptide) pyrophosphoryl-undecaprenol N-acetylglucosamine transferase (351 aa).

Residues 11 to 13 (TGG), N120, R161, S187, and Q281 each bind UDP-N-acetyl-alpha-D-glucosamine.

This sequence belongs to the glycosyltransferase 28 family. MurG subfamily.

Its subcellular location is the cell inner membrane. The catalysed reaction is di-trans,octa-cis-undecaprenyl diphospho-N-acetyl-alpha-D-muramoyl-L-alanyl-D-glutamyl-meso-2,6-diaminopimeloyl-D-alanyl-D-alanine + UDP-N-acetyl-alpha-D-glucosamine = di-trans,octa-cis-undecaprenyl diphospho-[N-acetyl-alpha-D-glucosaminyl-(1-&gt;4)]-N-acetyl-alpha-D-muramoyl-L-alanyl-D-glutamyl-meso-2,6-diaminopimeloyl-D-alanyl-D-alanine + UDP + H(+). Its pathway is cell wall biogenesis; peptidoglycan biosynthesis. Cell wall formation. Catalyzes the transfer of a GlcNAc subunit on undecaprenyl-pyrophosphoryl-MurNAc-pentapeptide (lipid intermediate I) to form undecaprenyl-pyrophosphoryl-MurNAc-(pentapeptide)GlcNAc (lipid intermediate II). The chain is UDP-N-acetylglucosamine--N-acetylmuramyl-(pentapeptide) pyrophosphoryl-undecaprenol N-acetylglucosamine transferase from Rippkaea orientalis (strain PCC 8801 / RF-1) (Cyanothece sp. (strain PCC 8801)).